A 181-amino-acid chain; its full sequence is Probable nicotinate-nucleotide adenylyltransferase (181 aa).

The protein belongs to the NadD family.

It catalyses the reaction nicotinate beta-D-ribonucleotide + ATP + H(+) = deamido-NAD(+) + diphosphate. It functions in the pathway cofactor biosynthesis; NAD(+) biosynthesis; deamido-NAD(+) from nicotinate D-ribonucleotide: step 1/1. Functionally, catalyzes the reversible adenylation of nicotinate mononucleotide (NaMN) to nicotinic acid adenine dinucleotide (NaAD). This is Probable nicotinate-nucleotide adenylyltransferase from Campylobacter jejuni subsp. jejuni serotype O:23/36 (strain 81-176).